The primary structure comprises 109 residues: Sperm-specific class P protein 19 (109 aa).

Positions 1-109 constitute an MSP domain; the sequence is MSLTADPPAC…TVTIPMSATA (109 aa).

As to quaternary structure, monomer. As to expression, expressed at higher level in testis.

This is Sperm-specific class P protein 19 (ssp-19) from Caenorhabditis elegans.